Consider the following 172-residue polypeptide: Iron-sulfur cluster assembly protein SufA (172 aa).

The N-terminal stretch at 1 to 19 (MFINIFLFLFAATINISSS) is a signal peptide. 3 residues coordinate [4Fe-4S] cluster: C96, C164, and C166.

It belongs to the HesB/IscA family. As to quaternary structure, homodimer.

It is found in the plastid. Its subcellular location is the apicoplast. It participates in cofactor biosynthesis; iron-sulfur cluster biosynthesis. Functionally, participates in the sulfur mobilization (SUF) pathway for iron-sulfur (Fe-S) cluster biogenesis. Involved in the pre-assembly of [4Fe-4S] clusters and their transfer to target proteins. The protein is Iron-sulfur cluster assembly protein SufA of Plasmodium berghei (strain Anka).